A 308-amino-acid polypeptide reads, in one-letter code: S-adenosylmethionine-dependent nucleotide dehydratase (308 aa).

Residues 7-253 enclose the Radical SAM core domain; that stretch reads SIQELVINFH…WQSYLMINPE (247 aa). Cys21, Cys25, and Cys28 together coordinate [4Fe-4S] cluster.

Belongs to the radical SAM superfamily. Viperin family. [4Fe-4S] cluster is required as a cofactor.

It catalyses the reaction CTP + AH2 + S-adenosyl-L-methionine = 3'-deoxy-3',4'-didehydro-CTP + 5'-deoxyadenosine + L-methionine + A + H2O + H(+). The catalysed reaction is GTP + AH2 + S-adenosyl-L-methionine = 3'-deoxy-3',4'-didehydro-GTP + 5'-deoxyadenosine + L-methionine + A + H2O + H(+). The enzyme catalyses UTP + AH2 + S-adenosyl-L-methionine = 3'-deoxy-3',4'-didehydro-UTP + 5'-deoxyadenosine + L-methionine + A + H2O + H(+). In terms of biological role, expression of pVip58 in E.coli (strain MG1655) confers resistance to phages lambda, P1 and T7; delays culture collapse upon infection with T7. Catalyzes the conversion of cytidine triphosphate (CTP) to 3'-deoxy-3',4'-didehydro-CTP (ddhCTP), guanosine triphosphate (GTP) to 3'-deoxy-3',4'-didehydro-GTP (ddhGTP) and uridine triphosphate (UTP) to 3'-deoxy-3',4'-didehydro-UTP (ddhUTP), probably via a SAM-dependent radical mechanism. The modified nucleotide represses transcription from T7 RNA polymerase-directed genes (possibly by acting as chain terminators), strongly suggesting these nucleotides block viral polymerase transcription. This Pseudoalteromonas ulvae protein is S-adenosylmethionine-dependent nucleotide dehydratase.